Here is a 181-residue protein sequence, read N- to C-terminus: Shikimate kinase 2 (181 aa).

12–17 provides a ligand contact to ATP; that stretch reads GCGKTT. Mg(2+) is bound by residues T16 and D32. Substrate is bound by residues D34, R58, and G79. An LID domain region spans residues 112–126; that stretch reads EAEPEADLRPTLTGK. R120 contributes to the ATP binding site. R139 lines the substrate pocket.

It belongs to the shikimate kinase family. AroL subfamily. As to quaternary structure, monomer. The cofactor is Mg(2+).

Its subcellular location is the cytoplasm. The catalysed reaction is shikimate + ATP = 3-phosphoshikimate + ADP + H(+). It functions in the pathway metabolic intermediate biosynthesis; chorismate biosynthesis; chorismate from D-erythrose 4-phosphate and phosphoenolpyruvate: step 5/7. Its function is as follows. Catalyzes the specific phosphorylation of the 3-hydroxyl group of shikimic acid using ATP as a cosubstrate. The protein is Shikimate kinase 2 of Salmonella enteritidis PT4 (strain P125109).